We begin with the raw amino-acid sequence, 277 residues long: Sulfur carrier protein FdhD (277 aa).

The Cysteine persulfide intermediate role is filled by Cys123. 263 to 268 (FVRGNK) lines the Mo-bis(molybdopterin guanine dinucleotide) pocket.

It belongs to the FdhD family.

It localises to the cytoplasm. In terms of biological role, required for formate dehydrogenase (FDH) activity. Acts as a sulfur carrier protein that transfers sulfur from IscS to the molybdenum cofactor prior to its insertion into FDH. The chain is Sulfur carrier protein FdhD from Corynebacterium efficiens (strain DSM 44549 / YS-314 / AJ 12310 / JCM 11189 / NBRC 100395).